A 1464-amino-acid polypeptide reads, in one-letter code: Glutamate receptor ionotropic, NMDA 2A (1464 aa).

The N-terminal stretch at 1–22 (MGRVGYWTLLVLPALLVWRGPA) is a signal peptide. At 23 to 556 (PSAAAEKGPP…SAFLEPFSAS (534 aa)) the chain is on the extracellular side. Histidine 44 provides a ligand contact to Zn(2+). An N-linked (GlcNAc...) asparagine glycan is attached at asparagine 75. Cysteine 87 and cysteine 320 are oxidised to a cystine. Residues histidine 128, glutamate 266, and aspartate 282 each coordinate Zn(2+). Residues asparagine 340, asparagine 380, asparagine 443, and asparagine 444 are each glycosylated (N-linked (GlcNAc...) asparagine). Disulfide bonds link cysteine 429-cysteine 455 and cysteine 436-cysteine 456. L-glutamate contacts are provided by serine 511, threonine 513, and arginine 518. An N-linked (GlcNAc...) asparagine glycan is attached at asparagine 541. A helical transmembrane segment spans residues 557 to 576 (VWVMMFVMLLIVSAIAVFVF). Residues 577–600 (EYFSPVGYNRNLAKGKAPHGPSFT) are Cytoplasmic-facing. Residues 599–620 (FTIGKAIWLLWGLVFNNSVPVQ) are pore-forming. Residues 601-615 (IGKAIWLLWGLVFNN) constitute an intramembrane region (discontinuously helical). Topologically, residues 616–625 (SVPVQNPKGT) are cytoplasmic. A helical membrane pass occupies residues 626-646 (TSKIMVSVWAFFAVIFLASYT). Residues 647 to 814 (ANLAAFMIQE…NEVMSSQLDI (168 aa)) are Extracellular-facing. Asparagine 687 is a glycosylation site (N-linked (GlcNAc...) asparagine). Serine 689, threonine 690, and aspartate 731 together coordinate L-glutamate. A disulfide bridge connects residues cysteine 745 and cysteine 800. Residues 815 to 835 (DNMAGVFYMLAAAMALSLITF) form a helical membrane-spanning segment. Residues 836-1464 (IWEHLFYWKL…KKMPSIESDV (629 aa)) lie on the Cytoplasmic side of the membrane. 3 positions are modified to phosphoserine: serine 882, serine 890, and serine 929. Composition is skewed to polar residues over residues 997 to 1010 (EVAVSTESKANSRP) and 1023 to 1032 (QDSLSQNPVS). The disordered stretch occupies residues 997 to 1083 (EVAVSTESKA…PDNSKNHKTK (87 aa)). Serine 1025 is modified (phosphoserine). Basic and acidic residues-rich tracts occupy residues 1033-1043 (QRDEATAENRT) and 1052-1061 (LPEEMAHSDI). Residues serine 1059 and serine 1062 each carry the phosphoserine modification. A compositionally biased stretch (basic and acidic residues) spans 1070–1083 (CHREPDNSKNHKTK). Phosphoserine is present on residues serine 1198 and serine 1291. Residues 1335-1372 (KLSGKKSSLFPQGLEDSKRSKSLLPDHTSDNPFLHSHR) are disordered. The short motif at 1462–1464 (SDV) is the PDZ-binding element.

Belongs to the glutamate-gated ion channel (TC 1.A.10.1) family. NR2A/GRIN2A subfamily. Heterotetramer. Forms heterotetrameric channels composed of two GluN1/zeta subunits (GRIN1), and two identical GluN2/epsilon subunits (GRIN2A, GRIN2B, GRIN2C or GRIN2D) or GluN3 subunits (GRIN3A or GRIN3B) (in vitro). Can also form heterotetrameric channels that contain at least two GluN1 subunits and at least two different GluN2 subunits (or a combination of one GluN2 and one GluN3 subunits) (in vitro). In vivo, the subunit composition may depend on the expression levels of the different subunits. Found in a complex with GRIN1, GRIN3A and PPP2CB. Found in a complex with GRIN1 and GRIN3B. Interacts with AIP1. Interacts with HIP1 and NETO1. Interacts with SNX27 (via PDZ domain); the interaction is required for recycling to the plasma membrane when endocytosed and prevent degradation in lysosomes. Interacts with PDZ domains of PATJ and DLG4. Interacts with LRFN2. Interacts with RPH3A and DLG4; this ternary complex regulates NMDA receptor composition at postsynaptic membranes. Interacts with SORCS2. Interacts with ARC; preventing ARC oligomerization. Interacts (via the extreme C-terminus) with FRMPD2 (the second PDZ domain); the interaction is direct and is likely to promote NMDAR-mediated neural signal transmission. GRIN2A binds FRMPD2 with lower affinity than GRIN2B.

It localises to the cell projection. Its subcellular location is the dendritic spine. It is found in the cell membrane. The protein localises to the synapse. The protein resides in the postsynaptic cell membrane. It localises to the cytoplasmic vesicle membrane. The enzyme catalyses Ca(2+)(in) = Ca(2+)(out). It carries out the reaction Na(+)(in) = Na(+)(out). It catalyses the reaction K(+)(in) = K(+)(out). With respect to regulation, NMDA glutamate receptor activity is inhibited by endogenous Mg(2+) in a voltage-dependent manner. NMDA glutamate receptor activity is inhibited by endogenous Zn(2+). NMDA glutamate receptor activity is inhibited by endogenous protons. Its function is as follows. Component of N-methyl-D-aspartate (NMDA) receptors (NMDARs) that function as heterotetrameric, ligand-gated cation channels with high calcium permeability and voltage-dependent block by Mg(2+). NMDARs participate in synaptic plasticity for learning and memory formation by contributing to the slow phase of excitatory postsynaptic current, long-term synaptic potentiation, and learning. Channel activation requires binding of the neurotransmitter L-glutamate to the GluN2 subunit, glycine or D-serine binding to the GluN1 subunit, plus membrane depolarization to eliminate channel inhibition by Mg(2+). NMDARs mediate simultaneously the potasium efflux and the influx of calcium and sodium. Each GluN2 subunit confers differential attributes to channel properties, including activation, deactivation and desensitization kinetics, pH sensitivity, Ca2(+) permeability, and binding to allosteric modulators. Participates in the synaptic plasticity regulation through activation by the L-glutamate releaseed by BEST1, into the synaptic cleft, upon F2R/PAR-1 activation in astrocyte. The sequence is that of Glutamate receptor ionotropic, NMDA 2A from Homo sapiens (Human).